A 95-amino-acid polypeptide reads, in one-letter code: MSIDIETARRVAHLARIRVDEADLPALAGELSGILTFMEQLNEVDVEGIEPMTSVTPMRLKRRQDVVTDGDMQDKVLSNAPDAREGFFAVPKVVE.

The protein belongs to the GatC family. Heterotrimer of A, B and C subunits.

It carries out the reaction L-glutamyl-tRNA(Gln) + L-glutamine + ATP + H2O = L-glutaminyl-tRNA(Gln) + L-glutamate + ADP + phosphate + H(+). The catalysed reaction is L-aspartyl-tRNA(Asn) + L-glutamine + ATP + H2O = L-asparaginyl-tRNA(Asn) + L-glutamate + ADP + phosphate + 2 H(+). Allows the formation of correctly charged Asn-tRNA(Asn) or Gln-tRNA(Gln) through the transamidation of misacylated Asp-tRNA(Asn) or Glu-tRNA(Gln) in organisms which lack either or both of asparaginyl-tRNA or glutaminyl-tRNA synthetases. The reaction takes place in the presence of glutamine and ATP through an activated phospho-Asp-tRNA(Asn) or phospho-Glu-tRNA(Gln). The protein is Aspartyl/glutamyl-tRNA(Asn/Gln) amidotransferase subunit C of Cereibacter sphaeroides (strain ATCC 17023 / DSM 158 / JCM 6121 / CCUG 31486 / LMG 2827 / NBRC 12203 / NCIMB 8253 / ATH 2.4.1.) (Rhodobacter sphaeroides).